The chain runs to 249 residues: uncharacterized protein (249 aa).

This is an uncharacterized protein from Escherichia coli O6:H1 (strain CFT073 / ATCC 700928 / UPEC).